A 375-amino-acid chain; its full sequence is tRNA-specific 2-thiouridylase MnmA 3 (375 aa).

Residues 11–18 (GMSGGIDS) and Met37 contribute to the ATP site. Cys104 serves as the catalytic Nucleophile. Cys104 and Cys201 are disulfide-bonded. Gly128 is an ATP binding site. Positions 150–152 (KDQ) are interaction with tRNA. The active-site Cysteine persulfide intermediate is Cys201. Residues 309–310 (RY) form an interaction with tRNA region.

It belongs to the MnmA/TRMU family.

It localises to the cytoplasm. The catalysed reaction is S-sulfanyl-L-cysteinyl-[protein] + uridine(34) in tRNA + AH2 + ATP = 2-thiouridine(34) in tRNA + L-cysteinyl-[protein] + A + AMP + diphosphate + H(+). Its function is as follows. Catalyzes the 2-thiolation of uridine at the wobble position (U34) of tRNA, leading to the formation of s(2)U34. The polypeptide is tRNA-specific 2-thiouridylase MnmA 3 (Phocaeicola vulgatus (strain ATCC 8482 / DSM 1447 / JCM 5826 / CCUG 4940 / NBRC 14291 / NCTC 11154) (Bacteroides vulgatus)).